We begin with the raw amino-acid sequence, 412 residues long: Hyaluronidase-3 (412 aa).

The N-terminal stretch at 1–22 (MIMHLGLMMVVGLTLCLMHGQA) is a signal peptide. Cystine bridges form between C42/C332, C206/C221, C357/C368, C362/C396, and C398/C407. N-linked (GlcNAc...) asparagine glycosylation occurs at N69. Residue E129 is the Proton donor of the active site. A glycan (N-linked (GlcNAc...) asparagine) is linked at N216. Residues 353-408 (AAMACSHQRCHGHGRCARKDPGQMEAFLHLQPDDSLGAWNSFRCHCYSGWAGPTCL) enclose the EGF-like domain.

Belongs to the glycosyl hydrolase 56 family. N-glycosylated. Expressed in testis, epididymal tissue, epididymal luminal fluid (ELF), acrosome-intact (AI) sperm and caput (CAP), corpus (COR) and caudal (CAU) sperm. Higher expression in sperm than testis (at protein level). Liver, kidney, skin, brain, stomach and testis. Expressed mainly in granulosa cells of the ovaries. Expressed in small and large antral follicles. Not present in theca or stroma cells. Expressed in testis and liver. Expressed in testis and CAP, COR, and CAU epididymis tissue.

It localises to the secreted. Its subcellular location is the cell membrane. The protein localises to the cytoplasmic vesicle. The protein resides in the secretory vesicle. It is found in the acrosome. It localises to the endoplasmic reticulum. Its subcellular location is the early endosome. The catalysed reaction is Random hydrolysis of (1-&gt;4)-linkages between N-acetyl-beta-D-glucosamine and D-glucuronate residues in hyaluronate.. In terms of biological role, facilitates sperm penetration into the layer of cumulus cells surrounding the egg by digesting hyaluronic acid. Involved in induction of the acrosome reaction in the sperm. Involved in follicular atresia, the breakdown of immature ovarian follicles that are not selected to ovulate. Induces ovarian granulosa cell apoptosis, possibly via apoptotic signaling pathway involving CASP8 and CASP3 activation, and poly(ADP-ribose) polymerase (PARP) cleavage. Has no hyaluronidase activity in embryonic fibroblasts in vitro. Has no hyaluronidase activity in granulosa cells in vitro. This Mus musculus (Mouse) protein is Hyaluronidase-3 (Hyal3).